The sequence spans 173 residues: Peptide deformylase (173 aa).

Residues Cys91 and His133 each contribute to the Fe cation site. The active site involves Glu134. Residue His137 participates in Fe cation binding.

This sequence belongs to the polypeptide deformylase family. Fe(2+) serves as cofactor.

It catalyses the reaction N-terminal N-formyl-L-methionyl-[peptide] + H2O = N-terminal L-methionyl-[peptide] + formate. In terms of biological role, removes the formyl group from the N-terminal Met of newly synthesized proteins. Requires at least a dipeptide for an efficient rate of reaction. N-terminal L-methionine is a prerequisite for activity but the enzyme has broad specificity at other positions. The protein is Peptide deformylase of Buchnera aphidicola subsp. Acyrthosiphon pisum (strain 5A).